Reading from the N-terminus, the 723-residue chain is Peroxisomal bifunctional enzyme (723 aa).

The enoyl-CoA hydratase / isomerase stretch occupies residues 1–282; sequence MAEYTRLHNA…LAERKANKWS (282 aa). Lysine 38 carries the N6-succinyllysine modification. Residue glycine 101 participates in substrate binding. N6-acetyllysine; alternate is present on lysine 165. An N6-succinyllysine; alternate modification is found at lysine 165. Lysine 171 is modified (N6-acetyllysine). The residue at position 219 (lysine 219) is an N6-acetyllysine; alternate. N6-succinyllysine; alternate is present on lysine 219. Lysine 250 carries the post-translational modification N6-acetyllysine. An N6-succinyllysine mark is found at lysine 280 and lysine 290. The 3-hydroxyacyl-CoA dehydrogenase stretch occupies residues 283 to 572; the sequence is TPSGASWKTA…DVLCELGRFG (290 aa). Residues lysine 346, lysine 350, and lysine 464 each carry the N6-acetyllysine modification. N6-succinyllysine is present on lysine 532. Threonine 548 is modified (phosphothreonine). Lysine 577 carries the N6-succinyllysine modification. An N6-acetyllysine; alternate mark is found at lysine 584, lysine 591, and lysine 710. N6-succinyllysine; alternate occurs at positions 584, 591, and 710. Positions 699–723 are disordered; the sequence is KKLASQGNPPQKEWQSLAGSPSSKL. Polar residues predominate over residues 703 to 723; sequence SQGNPPQKEWQSLAGSPSSKL. Residue serine 718 is modified to Phosphoserine. Positions 721–723 match the Microbody targeting signal motif; the sequence is SKL. At lysine 722 the chain carries N6-succinyllysine.

It in the N-terminal section; belongs to the enoyl-CoA hydratase/isomerase family. The protein in the C-terminal section; belongs to the 3-hydroxyacyl-CoA dehydrogenase family. In terms of assembly, monomer. In terms of processing, acetylated, leading to enhanced enzyme activity. Acetylation is enhanced by up to 80% after treatment either with trichostin A (TSA) or with nicotinamide (NAM) with highest increase on Lys-346. Acetylation and enzyme activity increased by about 1.5% on addition of fatty acids.

The protein resides in the peroxisome. It catalyses the reaction a (3S)-3-hydroxyacyl-CoA = a (2E)-enoyl-CoA + H2O. The enzyme catalyses a 4-saturated-(3S)-3-hydroxyacyl-CoA = a (3E)-enoyl-CoA + H2O. The catalysed reaction is a (3Z)-enoyl-CoA = a 4-saturated (2E)-enoyl-CoA. It carries out the reaction a (3E)-enoyl-CoA = a 4-saturated (2E)-enoyl-CoA. It catalyses the reaction a (3S)-3-hydroxyacyl-CoA + NAD(+) = a 3-oxoacyl-CoA + NADH + H(+). The enzyme catalyses (2S,3S)-3-hydroxy-2-methylbutanoyl-CoA = (2E)-2-methylbut-2-enoyl-CoA + H2O. The catalysed reaction is (3S)-hydroxyhexadecanoyl-CoA + NAD(+) = 3-oxohexadecanoyl-CoA + NADH + H(+). It carries out the reaction (3S)-hydroxyhexadecanoyl-CoA = (2E)-hexadecenoyl-CoA + H2O. It catalyses the reaction (2E)-hexadecenedioyl-CoA + H2O = (3S)-hydroxyhexadecanedioyl-CoA. The enzyme catalyses (3S)-hydroxyhexadecanedioyl-CoA + NAD(+) = 3-oxohexadecanedioyl-CoA + NADH + H(+). The catalysed reaction is (3E,5Z)-tetradecadienoyl-CoA = (2E,5Z)-tetradecadienoyl-CoA. It carries out the reaction (3E,5Z)-octadienoyl-CoA = (2E,5Z)-octadienoyl-CoA. It catalyses the reaction (3S)-hydroxydecanoyl-CoA + NAD(+) = 3-oxodecanoyl-CoA + NADH + H(+). The enzyme catalyses (3E)-decenoyl-CoA = (2E)-decenoyl-CoA. The catalysed reaction is (3Z)-hexenoyl-CoA = (2E)-hexenoyl-CoA. It carries out the reaction (3E)-hexenoyl-CoA = (2E)-hexenoyl-CoA. It catalyses the reaction (3S)-hydroxydecanoyl-CoA = (2E)-decenoyl-CoA + H2O. The enzyme catalyses (3S)-hydroxyhexanoyl-CoA = (2E)-hexenoyl-CoA + H2O. It participates in lipid metabolism; fatty acid beta-oxidation. With respect to regulation, enzyme activity enhanced by acetylation. Functionally, peroxisomal trifunctional enzyme possessing 2-enoyl-CoA hydratase, 3-hydroxyacyl-CoA dehydrogenase, and delta 3, delta 2-enoyl-CoA isomerase activities. Catalyzes two of the four reactions of the long chain fatty acids peroxisomal beta-oxidation pathway. Can also use branched-chain fatty acids such as 2-methyl-2E-butenoyl-CoA as a substrate, which is hydrated into (2S,3S)-3-hydroxy-2-methylbutanoyl-CoA. Optimal isomerase for 2,5 double bonds into 3,5 form isomerization in a range of enoyl-CoA species. Also able to isomerize both 3-cis and 3-trans double bonds into the 2-trans form in a range of enoyl-CoA species. Regulates the amount of medium-chain dicarboxylic fatty acids which are essential regulators of all fatty acid oxidation pathways. Also involved in the degradation of long-chain dicarboxylic acids through peroxisomal beta-oxidation. The protein is Peroxisomal bifunctional enzyme (EHHADH) of Pongo abelii (Sumatran orangutan).